The sequence spans 142 residues: Small heat shock protein IbpB (142 aa).

The 112-residue stretch at 26 to 137 (AGESQSFPPY…APQRIAISER (112 aa)) folds into the sHSP domain.

It belongs to the small heat shock protein (HSP20) family. Homodimer. Forms homomultimers of about 100-150 subunits at optimal growth temperatures. Conformation changes to oligomers at high temperatures or high ionic concentrations. The decrease in size of the multimers is accompanied by an increase in chaperone activity.

It localises to the cytoplasm. Functionally, associates with aggregated proteins, together with IbpA, to stabilize and protect them from irreversible denaturation and extensive proteolysis during heat shock and oxidative stress. Aggregated proteins bound to the IbpAB complex are more efficiently refolded and reactivated by the ATP-dependent chaperone systems ClpB and DnaK/DnaJ/GrpE. Its activity is ATP-independent. The sequence is that of Small heat shock protein IbpB from Klebsiella pneumoniae (strain 342).